The sequence spans 628 residues: MTTIDTASETKPFQAEVAELLNLMVHSVYSETDIFLRELISNASDALDKLRYESIANPALMADGGEPKIRIVPKKAPDTLTVIDNGIGMDRQELIDNLGTIAKSGTKSFLTKLTEAKDGAGLIGQFGVGFYAAFMVADSITVTSRRAGSAEAWTWSSSGGAGFEIAPASEEAAARIERGTEIVLHLKPDAAKYLEAYQIERIVSEYSDNIQFPIELVPEDGEPRQINSASALWQRSKSELTEEDYKQAYKQVAGAFDEPAMTLHYRAEGRQSYAVLLFAPSTKPFDLFEPERKGRVKLYVRRVFITADADLLPPYLRFLRGVIDSEDLPLNLSREMLQNNPQLAQIRKAVTGKVIGELDSLADKQPEQFAKIWDAFGPVIKEGLYEDYERREKLLSLARFTTTAGEKRSLAQYVEAMKENQTEIYYLVGDSLDRLKANPKLESAAARGIEVLLLTDAVDAFWTSGGLDFGGKPLKSLSQGEVNFDLIPKLDADKAEDKPDEAKADEATVIAVIKDALGDRVSDVKASQRLTASASCLVAGGFGPDRELEKMLARANKGAATKPVLEINLGHPLVAALADTKADKADATDLSFLLLEQAQILDGELPEDPAAFAGRLNRLVLRGVVAHG.

The tract at residues 1–334 (MTTIDTASET…SEDLPLNLSR (334 aa)) is a; substrate-binding. A b region spans residues 335–550 (EMLQNNPQLA…GFGPDRELEK (216 aa)). The tract at residues 551-628 (MLARANKGAA…LVLRGVVAHG (78 aa)) is c.

This sequence belongs to the heat shock protein 90 family. Homodimer.

The protein localises to the cytoplasm. Its function is as follows. Molecular chaperone. Has ATPase activity. This Rhodopseudomonas palustris (strain HaA2) protein is Chaperone protein HtpG.